Consider the following 122-residue polypeptide: Crustacean hyperglycemic hormones 5 (122 aa).

The N-terminal stretch at 1-26 (MSLGLIASRLVAVALVVVVACSTTWA) is a signal peptide. 3 cysteine pairs are disulfide-bonded: Cys55–Cys91, Cys71–Cys87, and Cys74–Cys100. Valine amide is present on Val120.

It belongs to the arthropod CHH/MIH/GIH/VIH hormone family.

It is found in the secreted. In terms of biological role, hormone found in the sinus gland of isopods and decapods which controls the blood sugar level. Has a secretagogue action over the amylase released from the midgut gland. May act as a stress hormone and may be involved in the control of molting and reproduction. This Penaeus monodon (Giant tiger prawn) protein is Crustacean hyperglycemic hormones 5 (CHH5).